A 323-amino-acid chain; its full sequence is Isoeugenol synthase 1 (323 aa).

NADP(+) is bound by residues 14–17 (TGYL), 36–47 (VMPLKKNSDDSK), 88–90 (VPQ), 113–115 (SEF), K135, and 155–157 (NSL). The active-site Proton donor/acceptor is the K135.

The protein belongs to the NmrA-type oxidoreductase family. As to expression, expressed in flowers, especially in corolla and tubes of petals, probably in both epidermal and mesophyll cell layers.

The catalysed reaction is (E)-isoeugenol + acetate + NADP(+) = (E)-coniferyl acetate + NADPH. It functions in the pathway aromatic compound metabolism; phenylpropanoid biosynthesis. With respect to regulation, inhibited by zinc and copper ions. Repressed by 4-bromo-cinnamyl acetate. Functionally, involved in the biosynthesis of the floral volatile isoeugenol. Catalyzes the synthesis of the phenylpropene isoeugenol from coniferyl acetate. Phenylpropenes are the primary constituents of various essential plant oils. They are produced as antimicrobial and antianimal compounds, or as floral attractants of pollinators. Isoeugenol is a characteristic aromatic constituent of spices and a floral volatile compound. The protein is Isoeugenol synthase 1 of Petunia hybrida (Petunia).